The following is a 1390-amino-acid chain: DNA-directed RNA polymerase subunit beta'' (1390 aa).

Residues cysteine 224, cysteine 294, cysteine 301, and cysteine 304 each coordinate Zn(2+).

It belongs to the RNA polymerase beta' chain family. RpoC2 subfamily. In terms of assembly, in plastids the minimal PEP RNA polymerase catalytic core is composed of four subunits: alpha, beta, beta', and beta''. When a (nuclear-encoded) sigma factor is associated with the core the holoenzyme is formed, which can initiate transcription. The cofactor is Zn(2+).

The protein localises to the plastid. It is found in the chloroplast. It catalyses the reaction RNA(n) + a ribonucleoside 5'-triphosphate = RNA(n+1) + diphosphate. Its function is as follows. DNA-dependent RNA polymerase catalyzes the transcription of DNA into RNA using the four ribonucleoside triphosphates as substrates. The protein is DNA-directed RNA polymerase subunit beta'' of Ceratophyllum demersum (Rigid hornwort).